Reading from the N-terminus, the 121-residue chain is SQPHVNPFACYVAPDQGPCRAILRYYFDDDTQTCQRFTYGGCEGNANNXXXXEQCKASCKPETEYEAKKCLARPESGPCLAYMPMWGYDSKLGQCVEFIYGGCDGNDNKYTTEEECLKSCK.

2 BPTI/Kunitz inhibitor domains span residues 10–59 and 61–111; these read CYVA…KASC and PETE…NKYT. Disulfide bonds link C10–C59, C19–C42, C34–C55, C70–C120, C79–C103, and C95–C116.

In terms of processing, N-glycosylated. As to expression, highly expressed in gut. Low-level expression in salivary gland and ovary. Not detected in fat body and hemocytes.

The protein localises to the secreted. Functionally, serine protease inhibitor. Inhibits bovine trypsin, bovine chymotrypsin, human plasmin, human plasma kallikrein and human neutrophil elastase, but not bovine thrombin, human factor Xa or porcine pancreatic kallikrein. Reduces cell viability and inhibits capillary tube formation in vitro probably by reducing bradykinin release. May play a role in blocking blood coagulation during the larvae fixation on cattle. In Rhipicephalus microplus (Cattle tick), this protein is Kunitz-type serine protease inhibitor A.